Consider the following 110-residue polypeptide: uncharacterized protein (110 aa).

This is an uncharacterized protein from Methanocaldococcus jannaschii (strain ATCC 43067 / DSM 2661 / JAL-1 / JCM 10045 / NBRC 100440) (Methanococcus jannaschii).